The following is a 338-amino-acid chain: Putative peptide import ATP-binding protein BMEII0863 (338 aa).

In terms of domain architecture, ABC transporter spans 10 to 263 (KGLRTVFRTR…PRHPYTMGLL (254 aa)). Residue 43–50 (GESGSGKS) participates in ATP binding.

Belongs to the ABC transporter superfamily. The complex is composed of two ATP-binding proteins (BMEII0863 and BMEII0864), two transmembrane proteins (BMEII0860 and BMEII0861) and a solute-binding protein (BMEII0859).

It localises to the cell inner membrane. In terms of biological role, probably part of an ABC transporter complex that could be involved in peptide import. Probably responsible for energy coupling to the transport system. This Brucella melitensis biotype 1 (strain ATCC 23456 / CCUG 17765 / NCTC 10094 / 16M) protein is Putative peptide import ATP-binding protein BMEII0863.